The primary structure comprises 212 residues: Protein-L-isoaspartate O-methyltransferase (212 aa).

Residue Ser-60 is part of the active site.

Belongs to the methyltransferase superfamily. L-isoaspartyl/D-aspartyl protein methyltransferase family.

Its subcellular location is the cytoplasm. The enzyme catalyses [protein]-L-isoaspartate + S-adenosyl-L-methionine = [protein]-L-isoaspartate alpha-methyl ester + S-adenosyl-L-homocysteine. In terms of biological role, catalyzes the methyl esterification of L-isoaspartyl residues in peptides and proteins that result from spontaneous decomposition of normal L-aspartyl and L-asparaginyl residues. It plays a role in the repair and/or degradation of damaged proteins. The sequence is that of Protein-L-isoaspartate O-methyltransferase from Pseudomonas putida (strain W619).